An 874-amino-acid polypeptide reads, in one-letter code: Alanine--tRNA ligase (874 aa).

Zn(2+) contacts are provided by H562, H566, C664, and H668.

Belongs to the class-II aminoacyl-tRNA synthetase family. Requires Zn(2+) as cofactor.

The protein localises to the cytoplasm. The enzyme catalyses tRNA(Ala) + L-alanine + ATP = L-alanyl-tRNA(Ala) + AMP + diphosphate. Functionally, catalyzes the attachment of alanine to tRNA(Ala) in a two-step reaction: alanine is first activated by ATP to form Ala-AMP and then transferred to the acceptor end of tRNA(Ala). Also edits incorrectly charged Ser-tRNA(Ala) and Gly-tRNA(Ala) via its editing domain. The chain is Alanine--tRNA ligase from Shewanella halifaxensis (strain HAW-EB4).